Consider the following 1176-residue polypeptide: MDNNPNINECIPYNCLSNPEVEVLGGERIETGYTPIDISLSLTQFLLSEFVPGAGFVLGLVDIIWGIFGPSQWDAFLVQIEQLINQRIEEFARNQAISRLEGLSNLYQIYAESFREWEADPTNPALREEMRIQFNDMNSALTTAIPLFAVQNYQVPLLSVYVQAANLHLSVLRDVSVFGQRWGFDAATINSRYNDLTRLIGNYTDYAVRWYNTGLERVWGPDSRDWVRYNQFRRELTLTVLDIVALFSNYDSRRYPIRTVSQLTREIYTNPVLENFDGSFRGMAQRIEQNIRQPHLMDILNSITIYTDVHRGFNYWSGHQITASPVGFSGPEFAFPLFGNAGNAAPPVLVSLTGLGIFRTLSSPLYRRIILGSGPNNQELFVLDGTEFSFASLTTNLPSTIYRQRGTVDSLDVIPPQDNSVPPRAGFSHRLSHVTMLSQAAGAVYTLRAPTFSWQHRSAEFNNIIPSSQITQIPLTKSTNLGSGTSVVKGPGFTGGDILRRTSPGQISTLRVNITAPLSQRYRVRIRYASTTNLQFHTSIDGRPINQGNFSATMSSGSNLQSGSFRTVGFTTPFNFSNGSSVFTLSAHVFNSGNEVYIDRIEFVPAEVTFEAEYDLERAQKAVNELFTSSNQIGLKTDVTDYHIDQVSNLVECLSDEFCLDEKQELSEKVKHAKRLSDERNLLQDPNFRGINRQLDRGWRGSTDITIQGGDDVFKENYVTLLGTFDECYPTYLYQKIDESKLKAYTRYQLRGYIEDSQDLEIYLIRYNAKHETVNVPGTGSLWPLSAQSPIGKCGEPNRCAPHLEWNPDLDCSCRDGEKCAHHSHHFSLDIDVGCTDLNEDLGVWVIFKIKTQDGHARLGNLEFLEEKPLVGEALARVKRAEKKWRDKREKLEWETNIVYKEAKESVDALFVNSQYDQLQADTNIAMIHAADKRVHSIREAYLPELSVIPGVNAAIFEELEGRIFTAFSLYDARNVIKNGDFNNGLSCWNVKGHVDVEEQNNQRSVLVVPEWEAEVSQEVRVCPGRGYILRVTAYKEGYGEGCVTIHEIENNTDELKFSNCVEEEIYPNNTVTCNDYTVNQEEYGGAYTSRNRGYNEAPSVPADYASVYEEKSYTDGRRENPCEFNRGYRDYTPLPVGYVTKELEYFPETDKVWIEIGETEGTFIVDSVELLLMEE.

It belongs to the delta endotoxin family.

Promotes colloidosmotic lysis by binding to the midgut epithelial cells of many lepidopteran larvae. This chain is Pesticidal crystal protein Cry1Aa (cry1Aa), found in Bacillus thuringiensis subsp. aizawai.